Here is a 289-residue protein sequence, read N- to C-terminus: SAGA-associated factor 29kDa (289 aa).

Residues 9 to 36 (AQQIQDRLKDIQQNIHNVDEERRRAENS) adopt a coiled-coil conformation. The 142-residue stretch at 137–278 (GNYVAKVGDN…VIAYRPTKKG (142 aa)) folds into the SGF29 C-terminal domain. Histone H3K4me3 N-terminus binding stretches follow at residues 179–181 (DID) and 225–228 (QTTC). The segment at 249-251 (FED) is histone H3K4me3 binding.

Belongs to the SGF29 family. Component of the Spt-Ada-Gcn5 acetyltransferase (SAGA) complex consisting of wda/Taf5L, Saf6, Taf9, Taf10b, Taf12, Ada1, Spt3, Spt7, Spt20, Sf3b3, Sf3b5, Nipped-A/Tra1, a histone acetyltransferase (HAT) module made up of Gcn5, Ada2b (Isoform B), Ada3 and Sgf29, and a deubiquitinase (DUB) module made up of not/nonstop, Sgf11, Atxn7 and e(y)2. Component of the Chiffon histone acetyltransferase (CHAT) complex consisting of Ada3, Sgf29, Gcn5, chif/chiffon and Ada2b (Isoform A).

It localises to the nucleus. Its function is as follows. Component of both the SAGA and CHAT histone acetyltransferase complexes, which both predominantly acetylate histone H3. This is SAGA-associated factor 29kDa from Drosophila melanogaster (Fruit fly).